The primary structure comprises 676 residues: Beta-taxilin (676 aa).

2 disordered regions span residues 1–55 and 71–131; these read MEND…DISE and AASL…EQKL. 2 stretches are compositionally biased toward polar residues: residues 8-25 and 34-45; these read EKQQ…QGQS and QPLSPTNQTSAQ. A compositionally biased stretch (basic and acidic residues) spans 75–92; sequence VEKEGTTAETDKPEKEDV. Acidic residues predominate over residues 93–105; sequence GSMEDAECEDVNE. Residues 106–131 are compositionally biased toward basic and acidic residues; the sequence is ESEKDKPAPGDASRAKEPSASKEQKL. Residues 157-461 adopt a coiled-coil conformation; sequence EEKLDLLFKK…LYRKIKQAQL (305 aa). Positions 464-486 are disordered; sequence EVNGNDILEEDDDANTNPSSSEQ.

It belongs to the taxilin family. As to expression, specifically expressed in skeletal and cardiac muscle.

The protein localises to the cytoplasm. Promotes neurite-outgrowth. May be involved in intracellular vesicle traffic. In Gallus gallus (Chicken), this protein is Beta-taxilin (TXLNB).